The chain runs to 149 residues: Transcriptional repressor NrdR (149 aa).

Residues 3-34 (CPFCSHPETQVVETRVAEDGDFVRRRRQCGAC) fold into a zinc finger. The region spanning 49 to 139 (PNVVKKDGRR…VYRNFEDIDE (91 aa)) is the ATP-cone domain.

It belongs to the NrdR family. Requires Zn(2+) as cofactor.

Its function is as follows. Negatively regulates transcription of bacterial ribonucleotide reductase nrd genes and operons by binding to NrdR-boxes. The sequence is that of Transcriptional repressor NrdR from Paracidovorax citrulli (strain AAC00-1) (Acidovorax citrulli).